The primary structure comprises 306 residues: D-alanine--D-alanine ligase (306 aa).

Active-site residues include Glu15 and Ser150. The 203-residue stretch at 101–303 folds into the ATP-grasp domain; sequence KLLWKSLSLR…FDELILKILK (203 aa). 134 to 189 is an ATP binding site; the sequence is ILKLKFPVVIKPNNAGSSIGITIVNHPDLLIDSINLAFNYSNNIIIEKFLKGTEYT. Mg(2+)-binding residues include Asp257, Glu270, and Asn272. Ser281 is an active-site residue.

This sequence belongs to the D-alanine--D-alanine ligase family. Mg(2+) is required as a cofactor. Requires Mn(2+) as cofactor.

It is found in the cytoplasm. It catalyses the reaction 2 D-alanine + ATP = D-alanyl-D-alanine + ADP + phosphate + H(+). It participates in cell wall biogenesis; peptidoglycan biosynthesis. Its function is as follows. Cell wall formation. This is D-alanine--D-alanine ligase from Buchnera aphidicola subsp. Schizaphis graminum (strain Sg).